Consider the following 281-residue polypeptide: Oxidoreductase-like protein SRL4 (281 aa).

Positions 39, 60, 67, 152, and 197 each coordinate NADP(+). Residue Lys197 is the Lowers pKa of active site Tyr of the active site.

This sequence belongs to the short-chain dehydrogenases/reductases (SDR) family.

Functionally, may be involved in the regulation of dNTP production. Induces the SOS system when expressed in E.coli, therefore, it may play a role in DNA metabolism and/or in genome stability. This chain is Oxidoreductase-like protein SRL4 (SRL4), found in Saccharomyces cerevisiae (strain ATCC 204508 / S288c) (Baker's yeast).